Reading from the N-terminus, the 1321-residue chain is Multidrug resistance protein pgp-1 (1321 aa).

Residues 1–77 lie on the Cytoplasmic side of the membrane; the sequence is MLRNGSLRQS…YTTTLEKLLL (77 aa). The ABC transmembrane type-1 1 domain occupies 77 to 381; the sequence is LFIGTLVAVI…AGPQLAVLGT (305 aa). The helical transmembrane segment at 78 to 98 threads the bilayer; it reads FIGTLVAVITGAGLPLMSILQ. Residues Asn-115 and Asn-125 are each glycosylated (N-linked (GlcNAc...) asparagine). A helical membrane pass occupies residues 144–164; it reads AMTVGMWAAGQITVTCYLYVA. Asn-190 is a glycosylation site (N-linked (GlcNAc...) asparagine). A run of 4 helical transmembrane segments spans residues 213 to 233, 240 to 260, 321 to 341, and 350 to 370; these read KIGMAFQYLSQFITGFIVAFT, LVMLAVTPIQALCGFAIAKSM, ISFGAMQASNFISFALAFYIG, and LNFGDMLTTFSSVMMGSMALG. The Cytoplasmic segment spans residues 371-753; sequence LAGPQLAVLG…LYHARPHALS (383 aa). An ABC transporter 1 domain is found at 416 to 652; the sequence is ITVENVHFTY…QGLYYDLVTA (237 aa). 451–458 is a binding site for ATP; the sequence is GSSGCGKS. The next 2 membrane-spanning stretches (helical) occupy residues 754–774 and 798–818; these read LFIGMSTATIGGFIYPTYSVF and LMFLVLAAAQGICSFLMTFFM. The region spanning 754–1043 is the ABC transmembrane type-1 2 domain; it reads LFIGMSTATI…ATSYFPEYAK (290 aa). N-linked (GlcNAc...) asparagine glycosylation is present at Asn-850. Helical transmembrane passes span 874 to 894, 895 to 915, 978 to 998, and 1017 to 1037; these read FSTVITTLVSMVAGIGLAFFY, GWQMALLIIAILPIVAFGQYL, IQGLSYGCASSVLYLLNTCAY, and VLRVMYAITISTSTLGFATSY. The Cytoplasmic segment spans residues 1038-1321; that stretch reads FPEYAKATFA…LTQKQMTEKK (284 aa). The ABC transporter 2 domain maps to 1077 to 1315; it reads VIFKNVRFAY…KGAYYKLTQK (239 aa). 1112-1119 provides a ligand contact to ATP; it reads GPSGCGKS.

Belongs to the ABC transporter superfamily. ABCB family. Multidrug resistance exporter (TC 3.A.1.201) subfamily. As to expression, intestinal cells.

The protein resides in the membrane. It catalyses the reaction ATP + H2O + xenobioticSide 1 = ADP + phosphate + xenobioticSide 2.. Energy-dependent efflux pump responsible for decreased drug accumulation in multidrug-resistant cells. This Caenorhabditis elegans protein is Multidrug resistance protein pgp-1 (pgp-1).